The sequence spans 328 residues: POU domain, class 5, transcription factor 2 (328 aa).

The segment at 1 to 25 (MAGHRPSNHFCPLPGSGGGGPRGPM) is disordered. The region spanning 118-192 (DISGILKELQ…LLKKWLKEVE (75 aa)) is the POU-specific domain. A DNA-binding region (homeobox) is located at residues 210-269 (GKWRRASRERRIGNSLEKFFQRCPKPTPQQISHIAGCLQLQKDVVRVWFYNRSKMGSRPT).

Belongs to the POU transcription factor family. Class-5 subfamily. Expressed in skeletal and cardiac muscles, brain, heart and lung. Little or no detectable expression found in pancreas, kidney, liver or placenta.

Its subcellular location is the nucleus. Transcription factor that binds preferentially to the octamer motif (5'-ATGTTAAT-3'). May exert a regulatory function in meiotic events that are required for terminal differentiation of male germ cell. In Homo sapiens (Human), this protein is POU domain, class 5, transcription factor 2 (POU5F2).